The primary structure comprises 58 residues: Small ribosomal subunit protein bS21 (58 aa).

This sequence belongs to the bacterial ribosomal protein bS21 family.

The protein is Small ribosomal subunit protein bS21 of Lactobacillus johnsonii (strain CNCM I-12250 / La1 / NCC 533).